Reading from the N-terminus, the 353-residue chain is uncharacterized protein (353 aa).

Positions 1–18 (MKFVLFAQLAAVAAPAIA) are cleaved as a signal peptide. Residues 94–119 (EGGNVRRVPGGPSQSARQIGDSSTPM) are disordered. Over residues 105–119 (PSQSARQIGDSSTPM) the composition is skewed to polar residues. N-linked (GlcNAc...) asparagine glycans are attached at residues Asn165 and Asn312.

Belongs to the glycosyl hydrolase 3 family.

It is found in the secreted. This is an uncharacterized protein from Arthroderma benhamiae (strain ATCC MYA-4681 / CBS 112371) (Trichophyton mentagrophytes).